The primary structure comprises 357 residues: Arginine kinase Met e 2 (357 aa).

A Phosphagen kinase N-terminal domain is found at 9–91; that stretch reads KLEAGFKKLE…FDPIIEDYHV (83 aa). 64–68 provides a ligand contact to L-arginine; it reads GVGIY. The region spanning 119–356 is the Phosphagen kinase C-terminal domain; the sequence is FVISTRVRCG…LELIKIEKEM (238 aa). ATP-binding positions include 122–126 and histidine 185; that span reads STRVR. Glutamate 225 contributes to the L-arginine binding site. Arginine 229 lines the ATP pocket. Cysteine 271 provides a ligand contact to L-arginine. ATP is bound by residues 280–284 and 309–314; these read RASVH and RGTRGE. Position 314 (glutamate 314) interacts with L-arginine.

It belongs to the ATP:guanido phosphotransferase family.

It carries out the reaction L-arginine + ATP = N(omega)-phospho-L-arginine + ADP + H(+). Catalyzes the reversible transfer of high energy ATP gamma-phosphate group to L-arginine. The polypeptide is Arginine kinase Met e 2 (Metapenaeus ensis (Greasyback shrimp)).